The following is a 423-amino-acid chain: MAKNIQAIRGMNDCSPTESPLWQWIENKVRNVLAGYGYSEVRMPIVESTPLFARAIGEVTDVVSKEMYTFWDNDEQLTLRPEGTAGCVRAAIERGWIYNNEQRLWYMGPMFRHERPQKGRYRQFHQAGVEVFGIPNPEIDAELIILTARLWKELGIDQHVSLQLNSIGSLEARANYRSALVKFLENHTALMSDEEKERLVKNPLRILDTKNQALQEVLNDAPKLLDYLDDDSREHFAHLCHLLDAMGIAYEVNPKLVRGLDYYNKTVFEWVTSALGSQGTVCGGGRYDGLVEQLGGHATQGVGFAMGLERLVLLVQEVNKEINLPKAVDVYVVYSGEGATLNAFQMAERIRSELPQLGVMTHCSGGNFKKQFKRADKVEAQIALVIGESEVEQQTVVLKDLQSGAEQVIIAQADLIAELTKRF.

Belongs to the class-II aminoacyl-tRNA synthetase family. As to quaternary structure, homodimer.

The protein resides in the cytoplasm. The catalysed reaction is tRNA(His) + L-histidine + ATP = L-histidyl-tRNA(His) + AMP + diphosphate + H(+). This Actinobacillus pleuropneumoniae serotype 7 (strain AP76) protein is Histidine--tRNA ligase.